Here is a 977-residue protein sequence, read N- to C-terminus: Macrophage colony-stimulating factor 1 receptor (977 aa).

The first 18 residues, 1 to 18, serve as a signal peptide directing secretion; that stretch reads MFFALLFLIGILLGQVQG. Residues 19-519 lie on the Extracellular side of the membrane; it reads WSEPRIRLSS…MEVSDQIFTS (501 aa). Ig-like C2-type domains are found at residues 22–109, 120–198, 213–305, 316–407, and 408–513; these read PRIR…VHVF, PSTS…EKVS, PYVY…TQLL, PKLS…ASIT, and FDIK…MEVS. An intrachain disulfide couples Cys48 to Cys92. N-linked (GlcNAc...) asparagine glycosylation is found at Asn98, Asn101, Asn154, Asn163, Asn244, Asn286, Asn298, Asn361, Asn424, and Asn455. 2 cysteine pairs are disulfide-bonded: Cys138/Cys187 and Cys234/Cys289. Cysteines 430 and 495 form a disulfide. Residues 520–540 traverse the membrane as a helical segment; sequence AMCGSTVAMVVLGLLLIFMIY. Topologically, residues 541-977 are cytoplasmic; that stretch reads KYKQKPRYEI…LMKPNNYQFC (437 aa). The interval 544–576 is regulatory juxtamembrane domain; it reads QKPRYEIRWKIIEATNGNNYTFIDPTQLPYNEK. Tyr563 is subject to Phosphotyrosine; by autocatalysis. Residues 584-917 form the Protein kinase domain; sequence LKLGKTLGAG…KISQMIQRML (334 aa). ATP is bound by residues 590–598 and Lys618; that span reads LGAGAFGKV. A phosphotyrosine; by autocatalysis mark is found at Tyr701 and Tyr725. Catalysis depends on Asp781, which acts as the Proton acceptor. Residues 799–821 form an activation loop region; that stretch reads DFGLARDIMNDSNYVVKGNARLP. A phosphotyrosine; by autocatalysis mark is found at Tyr812 and Tyr929. The interval 919–977 is disordered; sequence ETSEQQDTQEYKNIPTEAEAEQQLESCDPVKHEDESFETSCDQEEEDQPLMKPNNYQFC. Residues 953–966 are compositionally biased toward acidic residues; sequence ESFETSCDQEEEDQ. Position 974 is a phosphotyrosine; by autocatalysis (Tyr974).

It belongs to the protein kinase superfamily. Tyr protein kinase family. CSF-1/PDGF receptor subfamily. Monomer. Homodimer. Interacts with CSF1. Autophosphorylated in response to CSF1 binding. autophosphorylation, leading to its degradation. Post-translationally, ubiquitinated. Becomes rapidly polyubiquitinated after autophosphorylation, leading to its degradation.

It localises to the cell membrane. It carries out the reaction L-tyrosyl-[protein] + ATP = O-phospho-L-tyrosyl-[protein] + ADP + H(+). Its activity is regulated as follows. Present in an inactive conformation in the absence of bound ligand. CSF1 binding leads to dimerization and activation by autophosphorylation on tyrosine residues. Tyrosine-protein kinase that acts as a cell-surface receptor for CSF1 and plays an essential role in the regulation of survival, proliferation and differentiation of hematopoietic precursor cells, especially mononuclear phagocytes, such as macrophages and monocytes. Plays an important role in innate immunity and in inflammatory processes. Plays an important role in the regulation of osteoclast proliferation and differentiation, the regulation of bone resorption, and is required for normal bone development. Promotes reorganization of the actin cytoskeleton, regulates formation of membrane ruffles, cell adhesion and cell migration. Activates several signaling pathways in response to ligand binding. The polypeptide is Macrophage colony-stimulating factor 1 receptor (csf1r) (Danio rerio (Zebrafish)).